A 99-amino-acid chain; its full sequence is Aspartyl/glutamyl-tRNA(Asn/Gln) amidotransferase subunit C (99 aa).

The protein belongs to the GatC family. In terms of assembly, heterotrimer of A, B and C subunits.

It carries out the reaction L-glutamyl-tRNA(Gln) + L-glutamine + ATP + H2O = L-glutaminyl-tRNA(Gln) + L-glutamate + ADP + phosphate + H(+). The catalysed reaction is L-aspartyl-tRNA(Asn) + L-glutamine + ATP + H2O = L-asparaginyl-tRNA(Asn) + L-glutamate + ADP + phosphate + 2 H(+). Allows the formation of correctly charged Asn-tRNA(Asn) or Gln-tRNA(Gln) through the transamidation of misacylated Asp-tRNA(Asn) or Glu-tRNA(Gln) in organisms which lack either or both of asparaginyl-tRNA or glutaminyl-tRNA synthetases. The reaction takes place in the presence of glutamine and ATP through an activated phospho-Asp-tRNA(Asn) or phospho-Glu-tRNA(Gln). In Burkholderia vietnamiensis (strain G4 / LMG 22486) (Burkholderia cepacia (strain R1808)), this protein is Aspartyl/glutamyl-tRNA(Asn/Gln) amidotransferase subunit C.